We begin with the raw amino-acid sequence, 61 residues long: MVMMKSFIVKGKFKAGNSWEKFTKKIESQNEKNATDKTYSIFGSKHGVKRSQIQIESVAEE.

The protein belongs to the eukaryotic ribosomal protein eL20 family. As to quaternary structure, part of the 50S ribosomal subunit. Binds 23S rRNA.

The polypeptide is Large ribosomal subunit protein eL20 (Methanosarcina mazei (strain ATCC BAA-159 / DSM 3647 / Goe1 / Go1 / JCM 11833 / OCM 88) (Methanosarcina frisia)).